A 246-amino-acid polypeptide reads, in one-letter code: ATP synthase subunit a, chloroplastic (246 aa).

A run of 5 helical transmembrane segments spans residues 35–55, 94–114, 132–152, 198–218, and 219–239; these read AQVL…TFLA, IPFI…GALI, DINT…YAGL, LVVA…MMFL, and GLFT…AYIG.

This sequence belongs to the ATPase A chain family. As to quaternary structure, F-type ATPases have 2 components, CF(1) - the catalytic core - and CF(0) - the membrane proton channel. CF(1) has five subunits: alpha(3), beta(3), gamma(1), delta(1), epsilon(1). CF(0) has four main subunits: a, b, b' and c.

The protein localises to the plastid. It is found in the chloroplast thylakoid membrane. Key component of the proton channel; it plays a direct role in the translocation of protons across the membrane. This chain is ATP synthase subunit a, chloroplastic, found in Chara vulgaris (Common stonewort).